We begin with the raw amino-acid sequence, 362 residues long: Divinyl chlorophyll a/b light-harvesting protein PcbF (362 aa).

The next 6 helical transmembrane spans lie at 27–47 (FIGS…ANTL), 89–109 (IAFI…AGLL), 150–170 (FILG…VEWA), 211–231 (VMGG…FHIA), 251–271 (AVLS…AFWC), and 316–336 (LANV…WHAI).

It belongs to the PsbB/PsbC family. IsiA/Pcb subfamily. As to quaternary structure, the antenna complex consists of divinyl chlorophylls (a and b) and divinyl chlorophyll a/b binding proteins and binds more divinyl chlorophyll b than does the antenna complex from high-light-adapted Prochlorococcus. It depends on divinyl chlorophyll a as a cofactor. The cofactor is divinyl chlorophyll b.

The protein localises to the cellular thylakoid membrane. The antenna complex functions as a light receptor, it captures and delivers excitation energy to photosystems II and I. The Prochlorales pcb genes are not related to higher plant LHCs. This is Divinyl chlorophyll a/b light-harvesting protein PcbF (pcbF) from Prochlorococcus marinus (strain NATL2A).